Reading from the N-terminus, the 369-residue chain is MRPLWLLTLLLALSQALPFEQKGFWDFTLDDGLLMMNDEEASGSDTTSGVPDLDSLTPTFSAMCPFGCHCHLRVVQCSDLGLKTVPKEISPDTTLLDLQNNDISELRKDDFKGLQHLYALVLVNNKISKIHEKAFSPLRKLQKLYISKNHLVEIPPNLPSSLVELRIHDNRIRKVPKGVFSGLRNMNCIEMGGNPLENSGFEPGAFDGLKLNYLRISEAKLTGIPKDLPETLNELHLDHNKIQAIELEDLLRYSKLYRLGLGHNQIRMIENGSLSFLPTLRELHLDNNKLSRVPAGLPDLKLLQVVYLHSNNITKVGINDFCPMGFGVKRAYYNGISLFNNPVPYWEVQPATFRCVTDRLAIQFGNYKK.

A signal peptide spans 1 to 16 (MRPLWLLTLLLALSQA). A propeptide spanning residues 17–37 (LPFEQKGFWDFTLDDGLLMMN) is cleaved from the precursor. Residues Ser42 and Ser48 are each glycosylated (O-linked (Xyl...) (glycosaminoglycan) serine). 2 disulfides stabilise this stretch: Cys64-Cys70 and Cys68-Cys77. LRR repeat units lie at residues 83 to 103 (KTVP…NNDI), 104 to 127 (SELR…NNKI), 128 to 151 (SKIH…KNHL), 152 to 172 (VEIP…DNRI), 173 to 196 (RKVP…GNPL), 197 to 221 (ENSG…EAKL), 222 to 242 (TGIP…HNKI), 243 to 266 (QAIE…HNQI), 267 to 290 (RMIE…NNKL), 291 to 313 (SRVP…SNNI), 314 to 343 (TKVG…NNPV), and 344 to 369 (PYWE…NYKK). N-linked (GlcNAc...) asparagine glycans are attached at residues Asn271 and Asn312. A disulfide bridge connects residues Cys322 and Cys355.

The protein belongs to the small leucine-rich proteoglycan (SLRP) family. SLRP class I subfamily. In terms of assembly, homodimer. Forms a ternary complex with MFAP2 and ELN. The two attached glycosaminoglycan chains can be either chondroitin sulfate or dermatan sulfate. In terms of tissue distribution, found in several connective tissues, especially in articular cartilages.

The protein resides in the secreted. Its subcellular location is the extracellular space. The protein localises to the extracellular matrix. May be involved in collagen fiber assembly. The sequence is that of Biglycan (Bgn) from Rattus norvegicus (Rat).